Consider the following 590-residue polypeptide: Monoterepene synthase TPS1, chloropastic (590 aa).

The transit peptide at 1–42 (MALNTFLHFPPCSLSSFSCAVPKLPLAIFHKTMARQIRCPRA) directs the protein to the chloroplast. Positions 304, 341, 345, 483, and 486 each coordinate (2E)-geranyl diphosphate. 2 residues coordinate Mg(2+): D341 and D345. The DDXXD motif motif lies at 341 to 345 (DDMYD). The Mg(2+) site is built by D486, T490, and E494.

It belongs to the terpene synthase family. Tpsb subfamily. In terms of assembly, monomer. Mg(2+) serves as cofactor.

The protein resides in the plastid. The protein localises to the chloroplast. The enzyme catalyses (2E)-geranyl diphosphate = beta-thujene + diphosphate. It catalyses the reaction (2E)-geranyl diphosphate = sabinene + diphosphate. The catalysed reaction is (2E)-geranyl diphosphate = beta-pinene + diphosphate. It carries out the reaction (2E)-geranyl diphosphate = alpha-terpinene + diphosphate. It participates in secondary metabolite biosynthesis; terpenoid biosynthesis. Its function is as follows. Monoterpene synthase involved in the biosynthesis of volatile organic compounds. Mediates the conversion of (2E)-geranyl diphosphate (GPP) into beta-thujene, sabinene, beta-pinene and alpha-terpinene. Does not use (2E,6E)-farnesyl diphosphate (FPP) as substrate. This is Monoterepene synthase TPS1, chloropastic from Cananga odorata (Ylang-ylang tree).